The sequence spans 200 residues: V-type proton ATPase subunit E (200 aa).

This sequence belongs to the V-ATPase E subunit family.

Produces ATP from ADP in the presence of a proton gradient across the membrane. This Thermoanaerobacter pseudethanolicus (strain ATCC 33223 / 39E) (Clostridium thermohydrosulfuricum) protein is V-type proton ATPase subunit E.